A 166-amino-acid polypeptide reads, in one-letter code: Holin-like protein TcdE (166 aa).

4 helical membrane passes run 15–35, 36–56, 77–97, and 111–131; these read IFFY…LSEH, IFIK…CLSA, MIAC…NFLF, and HLGI…VSIL.

The protein belongs to the bacteriophage holin family. As to quaternary structure, homomultimer.

The protein resides in the cell membrane. Its function is as follows. Holin-like protein required for secretion of toxins A and B (TcdA and TcdB). Facilitates the release of toxins to the extracellular environment without causing the bacterial cell lysis. In terms of biological role, has weak activity, suggesting that it may act as a antiholin when multiple forms are produced. The protein is Holin-like protein TcdE of Clostridioides difficile (Peptoclostridium difficile).